Here is a 402-residue protein sequence, read N- to C-terminus: MGLGQGWGWEASCFACLIRSCCQVVTFTFPFGFQGISQSLENVSGYYADARLEVGSTQLRTAGSCSHSFKRSFLEKKRFTEEATKYFRERVSPVHLQILLTNNEAWKRFVTAAELPRDEADALYEALKKLRTYAAIEDEYVQQKDEQFREWFLKEFPQVKRKIQESIEKLRALANGIEEVHRGCTISNVVSSSTGAASGIMSLAGLVLAPFTAGTSLALTAAGVGLGAASAVTGITTSIVEHSYTSSAEAEASRLTATSIDRLKVFKEVMRDITPNLLSLLNNYYEATQTIGSEIRAIRQARARARLPVTTWRISAGSGGQAERTIAGTTRAVSRGARILSATTSGIFLALDVVNLVYESKHLHEGAKSASAEELRRQAQELEENLMELTQIYQRLNPCHTH.

It belongs to the apolipoprotein L family. Widely expressed; the highest levels are in prostate, lung and placenta; also detected in kidney, bone marrow, spleen, thymus, spinal cord, adrenal gland, salivary gland, trachea and mammary gland; levels are low in brain, heart, fetal liver, pancreas and testis.

Its subcellular location is the cytoplasm. In terms of biological role, may affect the movement of lipids in the cytoplasm or allow the binding of lipids to organelles. In Homo sapiens (Human), this protein is Apolipoprotein L3 (APOL3).